Reading from the N-terminus, the 670-residue chain is Probable beta-glucosidase N (670 aa).

The N-terminal stretch at 1 to 21 is a signal peptide; that stretch reads MHSNILPVLTSVATLLGLVQG. N-linked (GlcNAc...) asparagine glycosylation is present at N51. A disordered region spans residues 65 to 87; that stretch reads FEPSDGVRSVQGSGKDYDNPAMR. N-linked (GlcNAc...) asparagine glycosylation occurs at N141. D152 is an active-site residue. N-linked (GlcNAc...) asparagine glycans are attached at residues N184, N248, N330, and N417.

Belongs to the glycosyl hydrolase 3 family.

Its subcellular location is the secreted. It catalyses the reaction Hydrolysis of terminal, non-reducing beta-D-glucosyl residues with release of beta-D-glucose.. Its pathway is glycan metabolism; cellulose degradation. In terms of biological role, beta-glucosidases are one of a number of cellulolytic enzymes involved in the degradation of cellulosic biomass. Catalyzes the last step releasing glucose from the inhibitory cellobiose. This Emericella nidulans (strain FGSC A4 / ATCC 38163 / CBS 112.46 / NRRL 194 / M139) (Aspergillus nidulans) protein is Probable beta-glucosidase N (bglN).